The following is a 250-amino-acid chain: Triosephosphate isomerase (250 aa).

9-11 (NWK) is a substrate binding site. The Electrophile role is filled by histidine 95. The active-site Proton acceptor is glutamate 167. Substrate contacts are provided by residues glycine 173, serine 213, and 234–235 (GG).

Belongs to the triosephosphate isomerase family. In terms of assembly, homodimer.

The protein resides in the cytoplasm. It carries out the reaction D-glyceraldehyde 3-phosphate = dihydroxyacetone phosphate. The protein operates within carbohydrate biosynthesis; gluconeogenesis. Its pathway is carbohydrate degradation; glycolysis; D-glyceraldehyde 3-phosphate from glycerone phosphate: step 1/1. Its function is as follows. Involved in the gluconeogenesis. Catalyzes stereospecifically the conversion of dihydroxyacetone phosphate (DHAP) to D-glyceraldehyde-3-phosphate (G3P). This is Triosephosphate isomerase from Exiguobacterium sibiricum (strain DSM 17290 / CCUG 55495 / CIP 109462 / JCM 13490 / 255-15).